The sequence spans 155 residues: Small ribosomal subunit protein uS7cz/uS7cy (155 aa).

It belongs to the universal ribosomal protein uS7 family. In terms of assembly, part of the 30S ribosomal subunit.

The protein localises to the plastid. The protein resides in the chloroplast. In terms of biological role, one of the primary rRNA binding proteins, it binds directly to 16S rRNA where it nucleates assembly of the head domain of the 30S subunit. This is Small ribosomal subunit protein uS7cz/uS7cy (rps7-A) from Coffea arabica (Arabian coffee).